The primary structure comprises 249 residues: uncharacterized protein (249 aa).

An N-terminal signal peptide occupies residues 1 to 20 (MSNQNKVLSLGLLLLAAVAA).

The protein belongs to the IIV-6 117L family.

This is an uncharacterized protein from Acheta domesticus (House cricket).